Reading from the N-terminus, the 889-residue chain is Protein SEY1 homolog (889 aa).

Topologically, residues 1–801 (MDTKTQIIDY…ETGAKMSLKN (801 aa)) are cytoplasmic. The 247-residue stretch at 31–277 (GFNYNVIAIL…IPSDGFAHYC (247 aa)) folds into the GB1/RHD3-type G domain. GTP is bound at residue 41–48 (GSQSSGKS). A disordered region spans residues 429–449 (RKDGKGGSSPSAGDKKDTKDT). A coiled-coil region spans residues 679–699 (LDEIMDVLKSKLDEISDNLSS). Residues 802–822 (VPLFFWVILLILGWNELLFFT) form a helical membrane-spanning segment. Topologically, residues 823–825 (RFF) are lumenal. The chain crosses the membrane as a helical span at residues 826-846 (FRLNIILPLFLAAAVILSTLV). The Cytoplasmic segment spans residues 847 to 889 (FNGNMEVLSIINKAVFFLAKNSFGVYRQLQAMGGKAAQGAAAD).

The protein belongs to the TRAFAC class dynamin-like GTPase superfamily. GB1/RHD3 GTPase family. RHD3 subfamily.

Its subcellular location is the endoplasmic reticulum membrane. Functionally, probable GTP-binding protein involved in generating and maintaining the structure of the tubular endoplasmic reticulum network. The polypeptide is Protein SEY1 homolog (Plasmodium vivax (strain Salvador I)).